The chain runs to 37 residues: Large ribosomal subunit protein bL36A (37 aa).

Belongs to the bacterial ribosomal protein bL36 family.

In Kocuria rhizophila (strain ATCC 9341 / DSM 348 / NBRC 103217 / DC2201), this protein is Large ribosomal subunit protein bL36A.